An 853-amino-acid chain; its full sequence is DNA mismatch repair protein MutS (853 aa).

614 to 621 lines the ATP pocket; the sequence is GPNMGGKS.

The protein belongs to the DNA mismatch repair MutS family.

In terms of biological role, this protein is involved in the repair of mismatches in DNA. It is possible that it carries out the mismatch recognition step. This protein has a weak ATPase activity. The polypeptide is DNA mismatch repair protein MutS (Escherichia coli O6:K15:H31 (strain 536 / UPEC)).